Consider the following 147-residue polypeptide: Bis(5'-nucleosyl)-tetraphosphatase [asymmetrical] (147 aa).

Ala2 is subject to N-acetylalanine. The region spanning 2–139 (ALRACGLIIF…EMKATLQEGH (138 aa)) is the Nudix hydrolase domain. Positions 43–64 (GHVDPGENDLETALRETQEETG) match the Nudix box motif.

It belongs to the Nudix hydrolase family. Requires a divalent metal cation as cofactor.

The enzyme catalyses P(1),P(4)-bis(5'-guanosyl) tetraphosphate + H2O = GMP + GTP + 2 H(+). It catalyses the reaction a 5'-end CoA-ribonucleoside in mRNA + H2O = a 5'-end phospho-adenosine-phospho-ribonucleoside in mRNA + (R)-4'-phosphopantetheine + 2 H(+). It carries out the reaction a 5'-end FAD-phospho-ribonucleoside in mRNA + H2O = a 5'-end phospho-adenosine-phospho-ribonucleoside in mRNA + FMN + 2 H(+). Functionally, catalyzes the asymmetric hydrolysis of diadenosine 5',5'''-P1,P4-tetraphosphate (Ap4A) to yield AMP and ATP. Exhibits decapping activity towards FAD-capped RNAs and dpCoA-capped RNAs in vitro. The sequence is that of Bis(5'-nucleosyl)-tetraphosphatase [asymmetrical] (Nudt2) from Rattus norvegicus (Rat).